Here is a 325-residue protein sequence, read N- to C-terminus: Aldo-keto reductase family 1 member A1 (325 aa).

Ala2 carries the N-acetylalanine modification. Ser4 is subject to Phosphoserine. NADP(+)-binding positions include 11-20, Thr21, and Trp22; that span reads GQKMPLIGLG. Residue Ser38 is modified to Phosphoserine. Asp45 is a binding site for NADP(+). Catalysis depends on Tyr50, which acts as the Proton donor. Lys127 is subject to N6-acetyllysine; alternate. At Lys127 the chain carries N6-succinyllysine; alternate. The NADP(+) site is built by Ser162, Asn163, Ser211, Leu213, Ser215, Ser216, Lys263, Ser264, Val265, Thr266, Arg269, and Asn273. Position 211 is a phosphoserine (Ser211).

The protein belongs to the aldo/keto reductase family. As to quaternary structure, monomer.

It is found in the cytoplasm. The protein localises to the cytosol. The protein resides in the apical cell membrane. It catalyses the reaction a primary alcohol + NADP(+) = an aldehyde + NADPH + H(+). The catalysed reaction is L-gulonate + NADP(+) = aldehydo-D-glucuronate + NADPH + H(+). It carries out the reaction L-gulono-1,4-lactone + NADP(+) = D-glucurono-3,6-lactone + NADPH + H(+). The enzyme catalyses allyl alcohol + NADP(+) = acrolein + NADPH + H(+). It catalyses the reaction glycerol + NADP(+) = D-glyceraldehyde + NADPH + H(+). The catalysed reaction is glycerol + NADP(+) = L-glyceraldehyde + NADPH + H(+). It carries out the reaction hydroxyacetone + NADP(+) = methylglyoxal + NADPH + H(+). The enzyme catalyses 3-deoxyfructose + NADP(+) = 3-deoxyglucosone + NADPH + H(+). It catalyses the reaction (R)-mevalonate + NADP(+) = (R)-mevaldate + NADPH + H(+). The catalysed reaction is pyridine 3-methanol + NADP(+) = pyridine-3-carbaldehyde + NADPH + H(+). It carries out the reaction S-nitroso-CoA + NADPH + H(+) = sulfinamide-CoA + NADP(+). The enzyme catalyses S-nitrosoglutathione + NADPH + H(+) = S-(hydroxysulfenamide)glutathione + NADP(+). Its function is as follows. Catalyzes the NADPH-dependent reduction of a wide variety of carbonyl-containing compounds to their corresponding alcohols. Displays enzymatic activity towards endogenous metabolites such as aromatic and aliphatic aldehydes, ketones, monosaccharides and bile acids, with a preference for negatively charged substrates, such as glucuronate and succinic semialdehyde. Plays an important role in ascorbic acid biosynthesis by catalyzing the reduction of D-glucuronic acid and D-glucurono-gamma-lactone. Functions as a detoxifiying enzyme by reducing a range of toxic aldehydes. Reduces methylglyoxal and 3-deoxyglucosone, which are present at elevated levels under hyperglycemic conditions and are cytotoxic. Involved also in the detoxification of lipid-derived aldehydes like acrolein. Plays a role in the activation of procarcinogens, such as polycyclic aromatic hydrocarbon trans-dihydrodiols, and in the metabolism of various xenobiotics and drugs. Also acts as an inhibitor of protein S-nitrosylation by mediating degradation of S-nitroso-coenzyme A (S-nitroso-CoA), a cofactor required to S-nitrosylate proteins. S-nitroso-CoA reductase activity is involved in reprogramming intermediary metabolism in renal proximal tubules, notably by inhibiting protein S-nitrosylation of isoform 2 of PKM (PKM2). Also acts as a S-nitroso-glutathione reductase by catalyzing the NADPH-dependent reduction of S-nitrosoglutathione. Displays no reductase activity towards retinoids. The protein is Aldo-keto reductase family 1 member A1 of Bos taurus (Bovine).